The primary structure comprises 101 residues: NAD(P)H-quinone oxidoreductase subunit 4L, chloroplastic (101 aa).

The next 3 membrane-spanning stretches (helical) occupy residues 2 to 22 (ILEHVLVLSAYLFLIGLYGLI), 32 to 52 (MCLELILNAVNMNFVTFSDFF), and 61 to 81 (IFCIFVIAIAAAEAAIGLAIV).

It belongs to the complex I subunit 4L family. In terms of assembly, NDH is composed of at least 16 different subunits, 5 of which are encoded in the nucleus.

It is found in the plastid. The protein localises to the chloroplast thylakoid membrane. The catalysed reaction is a plastoquinone + NADH + (n+1) H(+)(in) = a plastoquinol + NAD(+) + n H(+)(out). The enzyme catalyses a plastoquinone + NADPH + (n+1) H(+)(in) = a plastoquinol + NADP(+) + n H(+)(out). In terms of biological role, NDH shuttles electrons from NAD(P)H:plastoquinone, via FMN and iron-sulfur (Fe-S) centers, to quinones in the photosynthetic chain and possibly in a chloroplast respiratory chain. The immediate electron acceptor for the enzyme in this species is believed to be plastoquinone. Couples the redox reaction to proton translocation, and thus conserves the redox energy in a proton gradient. This is NAD(P)H-quinone oxidoreductase subunit 4L, chloroplastic from Olimarabidopsis pumila (Dwarf rocket).